The primary structure comprises 229 residues: Small ribosomal subunit protein uS3 (229 aa).

The 70-residue stretch at Ile-18–Glu-87 folds into the KH type-2 domain.

It belongs to the universal ribosomal protein uS3 family. In terms of assembly, part of the 30S ribosomal subunit.

Its function is as follows. Binds the lower part of the 30S subunit head. The chain is Small ribosomal subunit protein uS3 from Saccharolobus solfataricus (strain ATCC 35092 / DSM 1617 / JCM 11322 / P2) (Sulfolobus solfataricus).